Consider the following 127-residue polypeptide: Large ribosomal subunit protein bL20 (127 aa).

This sequence belongs to the bacterial ribosomal protein bL20 family.

Its function is as follows. Binds directly to 23S ribosomal RNA and is necessary for the in vitro assembly process of the 50S ribosomal subunit. It is not involved in the protein synthesizing functions of that subunit. The chain is Large ribosomal subunit protein bL20 from Corynebacterium diphtheriae (strain ATCC 700971 / NCTC 13129 / Biotype gravis).